We begin with the raw amino-acid sequence, 431 residues long: Glutamyl-tRNA reductase (431 aa).

Substrate contacts are provided by residues 49 to 52 (TCDR), serine 109, 114 to 116 (EPH), and glutamine 120. Residue cysteine 50 is the Nucleophile of the active site. 189–194 (GTQEMG) contributes to the NADP(+) binding site.

It belongs to the glutamyl-tRNA reductase family. As to quaternary structure, homodimer.

The catalysed reaction is (S)-4-amino-5-oxopentanoate + tRNA(Glu) + NADP(+) = L-glutamyl-tRNA(Glu) + NADPH + H(+). The protein operates within porphyrin-containing compound metabolism; protoporphyrin-IX biosynthesis; 5-aminolevulinate from L-glutamyl-tRNA(Glu): step 1/2. Its pathway is porphyrin-containing compound metabolism; chlorophyll biosynthesis. Functionally, catalyzes the NADPH-dependent reduction of glutamyl-tRNA(Glu) to glutamate 1-semialdehyde (GSA). The chain is Glutamyl-tRNA reductase from Rhodospirillum rubrum (strain ATCC 11170 / ATH 1.1.1 / DSM 467 / LMG 4362 / NCIMB 8255 / S1).